A 546-amino-acid polypeptide reads, in one-letter code: 2-isopropylmalate synthase (546 aa).

Positions 8-271 (ILIFDTTLRD…NSFFKRNPDS (264 aa)) constitute a Pyruvate carboxyltransferase domain. Residues aspartate 17, histidine 208, histidine 210, and asparagine 244 each coordinate Mn(2+). A regulatory domain region spans residues 408 to 546 (QLCLVQVSCG…NKTFLSNPAN (139 aa)).

This sequence belongs to the alpha-IPM synthase/homocitrate synthase family. LeuA type 1 subfamily. In terms of assembly, homodimer. The cofactor is Mn(2+).

It localises to the cytoplasm. The catalysed reaction is 3-methyl-2-oxobutanoate + acetyl-CoA + H2O = (2S)-2-isopropylmalate + CoA + H(+). It participates in amino-acid biosynthesis; L-leucine biosynthesis; L-leucine from 3-methyl-2-oxobutanoate: step 1/4. Catalyzes the condensation of the acetyl group of acetyl-CoA with 3-methyl-2-oxobutanoate (2-ketoisovalerate) to form 3-carboxy-3-hydroxy-4-methylpentanoate (2-isopropylmalate). The chain is 2-isopropylmalate synthase from Prochlorococcus marinus (strain MIT 9312).